A 241-amino-acid chain; its full sequence is Ubiquinone biosynthesis O-methyltransferase (241 aa).

Residues Arg-46, Gly-66, Asp-87, and Met-131 each contribute to the S-adenosyl-L-methionine site.

Belongs to the methyltransferase superfamily. UbiG/COQ3 family.

The enzyme catalyses a 3-demethylubiquinol + S-adenosyl-L-methionine = a ubiquinol + S-adenosyl-L-homocysteine + H(+). It carries out the reaction a 3-(all-trans-polyprenyl)benzene-1,2-diol + S-adenosyl-L-methionine = a 2-methoxy-6-(all-trans-polyprenyl)phenol + S-adenosyl-L-homocysteine + H(+). Its pathway is cofactor biosynthesis; ubiquinone biosynthesis. Functionally, O-methyltransferase that catalyzes the 2 O-methylation steps in the ubiquinone biosynthetic pathway. This chain is Ubiquinone biosynthesis O-methyltransferase, found in Bordetella bronchiseptica (strain ATCC BAA-588 / NCTC 13252 / RB50) (Alcaligenes bronchisepticus).